The chain runs to 171 residues: Nicotinamide-nucleotide adenylyltransferase (171 aa).

The protein belongs to the archaeal NMN adenylyltransferase family.

It is found in the cytoplasm. The catalysed reaction is beta-nicotinamide D-ribonucleotide + ATP + H(+) = diphosphate + NAD(+). Its pathway is cofactor biosynthesis; NAD(+) biosynthesis; NAD(+) from nicotinamide D-ribonucleotide: step 1/1. This Methanococcus maripaludis (strain DSM 14266 / JCM 13030 / NBRC 101832 / S2 / LL) protein is Nicotinamide-nucleotide adenylyltransferase.